The chain runs to 432 residues: Adenylosuccinate synthetase (432 aa).

GTP contacts are provided by residues 12–18 and 40–42; these read GDEGKGK and GHT. Asp13 functions as the Proton acceptor in the catalytic mechanism. Residues Asp13 and Gly40 each contribute to the Mg(2+) site. IMP is bound by residues 13-16, 38-41, Thr129, Arg143, Gln224, Thr239, and Arg303; these read DEGK and NAGH. His41 (proton donor) is an active-site residue. A substrate-binding site is contributed by 299 to 305; that stretch reads VTTGRRR. Residues Arg305, 331–333, and 413–415 contribute to the GTP site; these read KLD and GVG.

This sequence belongs to the adenylosuccinate synthetase family. Homodimer. It depends on Mg(2+) as a cofactor.

It is found in the cytoplasm. The catalysed reaction is IMP + L-aspartate + GTP = N(6)-(1,2-dicarboxyethyl)-AMP + GDP + phosphate + 2 H(+). It functions in the pathway purine metabolism; AMP biosynthesis via de novo pathway; AMP from IMP: step 1/2. Plays an important role in the de novo pathway of purine nucleotide biosynthesis. Catalyzes the first committed step in the biosynthesis of AMP from IMP. The chain is Adenylosuccinate synthetase from Mycolicibacterium paratuberculosis (strain ATCC BAA-968 / K-10) (Mycobacterium paratuberculosis).